Reading from the N-terminus, the 524-residue chain is Peptide chain release factor 3 (524 aa).

Residues 11 to 278 enclose the tr-type G domain; the sequence is AKRRTFAIIS…SFVQYAPEPG (268 aa). GTP contacts are provided by residues 20–27, 88–92, and 142–145; these read SHPDAGKT, DTPGH, and NKLD.

It belongs to the TRAFAC class translation factor GTPase superfamily. Classic translation factor GTPase family. PrfC subfamily.

The protein resides in the cytoplasm. Increases the formation of ribosomal termination complexes and stimulates activities of RF-1 and RF-2. It binds guanine nucleotides and has strong preference for UGA stop codons. It may interact directly with the ribosome. The stimulation of RF-1 and RF-2 is significantly reduced by GTP and GDP, but not by GMP. This Lacticaseibacillus casei (strain BL23) (Lactobacillus casei) protein is Peptide chain release factor 3.